The following is a 99-amino-acid chain: uncharacterized protein (99 aa).

This is an uncharacterized protein from Methanocaldococcus jannaschii (strain ATCC 43067 / DSM 2661 / JAL-1 / JCM 10045 / NBRC 100440) (Methanococcus jannaschii).